Consider the following 579-residue polypeptide: Kelch repeat and BTB domain-containing protein F47D12.7 (579 aa).

A BTB domain is found at 51-119 (PTVTLVLRNN…PKAFEQGIKP (69 aa)). 6 Kelch repeats span residues 266–316 (AIVC…VVED), 317–363 (KLIV…RVND), 369–415 (LVFA…TIDN), 417–463 (IVAI…SIMN), 465–511 (VCMI…QMDT), and 513–559 (YVYV…TLSD).

The protein is Kelch repeat and BTB domain-containing protein F47D12.7 of Caenorhabditis elegans.